Here is a 90-residue protein sequence, read N- to C-terminus: MPFPLVKQDPTSKAFTEASERSTGTQILDVVKAPIGLFGDDAKHEFVTRQEQAVSVVSWAVAAGLIGELIGYRGARSGRKAILANIPFLA.

Residues 53-70 (AVSVVSWAVAAGLIGELI) form a helical membrane-spanning segment.

It localises to the virion membrane. Its function is as follows. Essential for membrane formation. In Pseudomonas savastanoi pv. phaseolicola (Pseudomonas syringae pv. phaseolicola), this protein is Major envelope protein (P9).